We begin with the raw amino-acid sequence, 166 residues long: Interferon gamma (166 aa).

An N-terminal signal peptide occupies residues 1–23 (MKYTSYILAFQLCIILGSSSCYS). Q24 is subject to Pyrrolidone carboxylic acid. 3 N-linked (GlcNAc...) asparagine glycosylation sites follow: N39, N44, and N106.

The protein belongs to the type II (or gamma) interferon family. Homodimer. As to expression, released primarily from activated T lymphocytes.

Its subcellular location is the secreted. In terms of biological role, produced by lymphocytes activated by specific antigens or mitogens. IFN-gamma, in addition to having antiviral activity, has important immunoregulatory functions. It is a potent activator of macrophages, it has antiproliferative effects on transformed cells and it can potentiate the antiviral and antitumor effects of the type I interferons. The polypeptide is Interferon gamma (IFNG) (Marmota monax (Woodchuck)).